A 415-amino-acid chain; its full sequence is Adenosylhomocysteinase (415 aa).

The substrate site is built by Thr-53, Asp-124, and Glu-147. 148-150 lines the NAD(+) pocket; that stretch reads TTT. Residues Lys-177 and Asp-181 each contribute to the substrate site. Residues Asn-182, 211–216, Glu-234, Asn-269, 290–292, and Asn-337 contribute to the NAD(+) site; these read GYGWVG and SGH.

This sequence belongs to the adenosylhomocysteinase family. NAD(+) is required as a cofactor.

It is found in the cytoplasm. It carries out the reaction S-adenosyl-L-homocysteine + H2O = L-homocysteine + adenosine. It functions in the pathway amino-acid biosynthesis; L-homocysteine biosynthesis; L-homocysteine from S-adenosyl-L-homocysteine: step 1/1. May play a key role in the regulation of the intracellular concentration of adenosylhomocysteine. In Sulfurisphaera tokodaii (strain DSM 16993 / JCM 10545 / NBRC 100140 / 7) (Sulfolobus tokodaii), this protein is Adenosylhomocysteinase.